The chain runs to 1019 residues: Photoactivated adenylate cyclase subunit alpha-like protein ST- (1019 aa).

Residues 55–148 (LRRLMYLSAS…GRMYGEWHMK (94 aa)) enclose the BLUF 1 domain. The region spanning 204 to 332 (VLTFIYLVEF…DCINTASRIT (129 aa)) is the Guanylate cyclase 1 domain. A BLUF 2 domain is found at 467 to 559 (LITLTYISQA…RVYGTPLDMT (93 aa)). Residues 615 to 744 (VMLATDICSF…EVSARVMAVE (130 aa)) form the Guanylate cyclase 2 domain. 3 disordered regions span residues 801 to 846 (EDHL…TRPH), 887 to 923 (QIAA…DQPA), and 963 to 993 (EGHR…NRAT). Basic residues predominate over residues 821–834 (RHQRPGPGRPRRGH).

The protein belongs to the adenylyl cyclase class-4/guanylyl cyclase family. In terms of assembly, heterotetramer of two alpha and two beta subunits.

It localises to the cell projection. It is found in the cilium. The protein resides in the flagellum. The chain is Photoactivated adenylate cyclase subunit alpha-like protein ST- from Euglena gracilis.